Reading from the N-terminus, the 76-residue chain is Large ribosomal subunit protein eL20 (76 aa).

The protein belongs to the eukaryotic ribosomal protein eL20 family. In terms of assembly, part of the 50S ribosomal subunit. Binds 23S rRNA.

The protein is Large ribosomal subunit protein eL20 of Methanococcus vannielii (strain ATCC 35089 / DSM 1224 / JCM 13029 / OCM 148 / SB).